The sequence spans 156 residues: Ribosomal RNA large subunit methyltransferase H (156 aa).

2 residues coordinate S-adenosyl-L-methionine: leucine 72 and glycine 104.

This sequence belongs to the RNA methyltransferase RlmH family. As to quaternary structure, homodimer.

Its subcellular location is the cytoplasm. It carries out the reaction pseudouridine(1915) in 23S rRNA + S-adenosyl-L-methionine = N(3)-methylpseudouridine(1915) in 23S rRNA + S-adenosyl-L-homocysteine + H(+). In terms of biological role, specifically methylates the pseudouridine at position 1915 (m3Psi1915) in 23S rRNA. This Maricaulis maris (strain MCS10) (Caulobacter maris) protein is Ribosomal RNA large subunit methyltransferase H.